The chain runs to 369 residues: Phosphoribosyl pyrophosphate synthase-associated protein 2 (369 aa).

At Met-1 the chain carries N-acetylmethionine. Phosphoserine occurs at positions 219, 227, and 233.

Belongs to the ribose-phosphate pyrophosphokinase family. Binds to PRPS1 and PRPS2.

Seems to play a negative regulatory role in 5-phosphoribose 1-diphosphate synthesis. The chain is Phosphoribosyl pyrophosphate synthase-associated protein 2 (Prpsap2) from Mus musculus (Mouse).